A 113-amino-acid polypeptide reads, in one-letter code: Histidine triad nucleotide-binding protein (113 aa).

C5 and C8 together coordinate Zn(2+). The 108-residue stretch at 6–113 folds into the HIT domain; it reads IFCKIAQKQI…GGKKLAWDKL (108 aa). D31 provides a ligand contact to AMP. Residue H47 participates in Zn(2+) binding. Positions 86, 92, and 94 each coordinate AMP. Position 97 (H97) interacts with Zn(2+). The Histidine triad motif motif lies at 97–101; the sequence is HIHFH. AMP is bound by residues H99 and H101. H99 serves as the catalytic Tele-AMP-histidine intermediate.

This sequence belongs to the HINT family.

It localises to the nucleus. The protein resides in the cytoplasm. It catalyses the reaction adenosine 5'-phosphoramidate + H2O = AMP + NH4(+). Its function is as follows. Hydrolyzes purine nucleotide phosphoramidates with a single phosphate group, including adenosine 5'monophosphoramidate (AMP-NH2), adenosine 5'monophosphomorpholidate (AMP-morpholidate) and guanosine 5'monophosphomorpholidate (GMP-morpholidate). Hydrolyzes lysyl-AMP (AMP-N-epsilon-(N-alpha-acetyl lysine methyl ester)) generated by lysine tRNA ligase, as well as Met-AMP, His-AMP and Asp-AMP, lysyl-GMP (GMP-N-epsilon-(N-alpha-acetyl lysine methyl ester)) and AMP-N-alanine methyl ester. May also function as scaffolding protein that mediates protein-protein interactions. The chain is Histidine triad nucleotide-binding protein from Entamoeba histolytica (strain ATCC 30459 / HM-1:IMSS / ABRM).